The following is a 349-amino-acid chain: Mannonate dehydratase (349 aa).

This sequence belongs to the mannonate dehydratase family. Fe(2+) is required as a cofactor. Mn(2+) serves as cofactor.

It carries out the reaction D-mannonate = 2-dehydro-3-deoxy-D-gluconate + H2O. The protein operates within carbohydrate metabolism; pentose and glucuronate interconversion. Functionally, catalyzes the dehydration of D-mannonate. The polypeptide is Mannonate dehydratase (Oceanobacillus iheyensis (strain DSM 14371 / CIP 107618 / JCM 11309 / KCTC 3954 / HTE831)).